The primary structure comprises 93 residues: Large ribosomal subunit protein uL23cz/uL23cy (93 aa).

Belongs to the universal ribosomal protein uL23 family. As to quaternary structure, part of the 50S ribosomal subunit.

The protein resides in the plastid. The protein localises to the chloroplast. Functionally, binds to 23S rRNA. The polypeptide is Large ribosomal subunit protein uL23cz/uL23cy (rpl23-A) (Oenothera elata subsp. hookeri (Hooker's evening primrose)).